The sequence spans 378 residues: N-acetyldiaminopimelate deacetylase (378 aa).

Residue Asp-65 is part of the active site. Glu-124 functions as the Proton acceptor in the catalytic mechanism.

This sequence belongs to the peptidase M20A family. N-acetyldiaminopimelate deacetylase subfamily.

It carries out the reaction N-acetyl-(2S,6S)-2,6-diaminopimelate + H2O = (2S,6S)-2,6-diaminopimelate + acetate. It functions in the pathway amino-acid biosynthesis; L-lysine biosynthesis via DAP pathway; LL-2,6-diaminopimelate from (S)-tetrahydrodipicolinate (acetylase route): step 3/3. Catalyzes the conversion of N-acetyl-diaminopimelate to diaminopimelate and acetate. This Anoxybacillus flavithermus (strain DSM 21510 / WK1) protein is N-acetyldiaminopimelate deacetylase.